We begin with the raw amino-acid sequence, 341 residues long: L-threonine 3-dehydrogenase (341 aa).

Zn(2+) is bound at residue Cys-38. Residues Thr-40 and His-43 each act as charge relay system in the active site. Positions 63, 64, 93, 96, 99, and 107 each coordinate Zn(2+). NAD(+)-binding positions include Ile-175, Asp-195, Arg-200, Leu-262 to Ile-264, and Ile-286 to Tyr-287.

This sequence belongs to the zinc-containing alcohol dehydrogenase family. Homotetramer. Zn(2+) is required as a cofactor.

The protein resides in the cytoplasm. The enzyme catalyses L-threonine + NAD(+) = (2S)-2-amino-3-oxobutanoate + NADH + H(+). Its pathway is amino-acid degradation; L-threonine degradation via oxydo-reductase pathway; glycine from L-threonine: step 1/2. Its function is as follows. Catalyzes the NAD(+)-dependent oxidation of L-threonine to 2-amino-3-ketobutyrate. The chain is L-threonine 3-dehydrogenase from Escherichia coli O139:H28 (strain E24377A / ETEC).